The following is a 170-amino-acid chain: ATP synthase subunit b (170 aa).

A helical transmembrane segment spans residues 5-25; sequence YFIPCLLLPTMMLASGGGGET.

Belongs to the ATPase B chain family. In terms of assembly, F-type ATPases have 2 components, F(1) - the catalytic core - and F(0) - the membrane proton channel. F(1) has five subunits: alpha(3), beta(3), gamma(1), delta(1), epsilon(1). F(0) has three main subunits: a(1), b(2) and c(10-14). The alpha and beta chains form an alternating ring which encloses part of the gamma chain. F(1) is attached to F(0) by a central stalk formed by the gamma and epsilon chains, while a peripheral stalk is formed by the delta and b chains.

The protein resides in the cell inner membrane. Functionally, f(1)F(0) ATP synthase produces ATP from ADP in the presence of a proton or sodium gradient. F-type ATPases consist of two structural domains, F(1) containing the extramembraneous catalytic core and F(0) containing the membrane proton channel, linked together by a central stalk and a peripheral stalk. During catalysis, ATP synthesis in the catalytic domain of F(1) is coupled via a rotary mechanism of the central stalk subunits to proton translocation. In terms of biological role, component of the F(0) channel, it forms part of the peripheral stalk, linking F(1) to F(0). The protein is ATP synthase subunit b of Wolinella succinogenes (strain ATCC 29543 / DSM 1740 / CCUG 13145 / JCM 31913 / LMG 7466 / NCTC 11488 / FDC 602W) (Vibrio succinogenes).